A 51-amino-acid polypeptide reads, in one-letter code: Insulin (51 aa).

3 cysteine pairs are disulfide-bonded: cysteine 7–cysteine 37, cysteine 19–cysteine 50, and cysteine 36–cysteine 41.

Belongs to the insulin family. Heterodimer of a B chain and an A chain linked by two disulfide bonds.

The protein resides in the secreted. Insulin decreases blood glucose concentration. It increases cell permeability to monosaccharides, amino acids and fatty acids. It accelerates glycolysis, the pentose phosphate cycle, and glycogen synthesis in liver. This Saimiri sciureus (Common squirrel monkey) protein is Insulin (INS).